Consider the following 385-residue polypeptide: Eukaryotic translation initiation factor 3 subunit M (385 aa).

Residues 180–342 enclose the PCI domain; that stretch reads NSELASKVMI…RKVHISSTMH (163 aa).

It belongs to the eIF-3 subunit M family. In terms of assembly, component of the eukaryotic translation initiation factor 3 (eIF-3) complex.

The protein localises to the cytoplasm. Functionally, component of the eukaryotic translation initiation factor 3 (eIF-3) complex, which is involved in protein synthesis of a specialized repertoire of mRNAs and, together with other initiation factors, stimulates binding of mRNA and methionyl-tRNAi to the 40S ribosome. The eIF-3 complex specifically targets and initiates translation of a subset of mRNAs involved in cell proliferation. The polypeptide is Eukaryotic translation initiation factor 3 subunit M (Anopheles gambiae (African malaria mosquito)).